A 318-amino-acid chain; its full sequence is Aspartate carbamoyltransferase catalytic subunit (318 aa).

2 residues coordinate carbamoyl phosphate: Arg59 and Thr60. Residue Lys87 coordinates L-aspartate. The carbamoyl phosphate site is built by Arg109, His137, and Gln140. Positions 170 and 224 each coordinate L-aspartate. Gly265 and Pro266 together coordinate carbamoyl phosphate.

The protein belongs to the aspartate/ornithine carbamoyltransferase superfamily. ATCase family. Heterododecamer (2C3:3R2) of six catalytic PyrB chains organized as two trimers (C3), and six regulatory PyrI chains organized as three dimers (R2).

The enzyme catalyses carbamoyl phosphate + L-aspartate = N-carbamoyl-L-aspartate + phosphate + H(+). Its pathway is pyrimidine metabolism; UMP biosynthesis via de novo pathway; (S)-dihydroorotate from bicarbonate: step 2/3. In terms of biological role, catalyzes the condensation of carbamoyl phosphate and aspartate to form carbamoyl aspartate and inorganic phosphate, the committed step in the de novo pyrimidine nucleotide biosynthesis pathway. The polypeptide is Aspartate carbamoyltransferase catalytic subunit (Rhizobium etli (strain CIAT 652)).